A 604-amino-acid chain; its full sequence is Cytosolic Fe-S cluster assembly factor nar1 (604 aa).

Positions 20, 62, 65, 68, 215, and 270 each coordinate [4Fe-4S] cluster. Residues 434 to 461 (LPGAKPAVRPAAGRRQPMSRNAVSTGSS) form a disordered region. Polar residues predominate over residues 451-461 (MSRNAVSTGSS). [4Fe-4S] cluster-binding residues include Cys473 and Cys477.

The protein belongs to the NARF family.

Its function is as follows. Component of the cytosolic Fe/S protein assembly machinery. Required for maturation of extramitochondrial Fe/S proteins. May play a role in the transfer of pre-assembled Fe/S clusters to target apoproteins. This chain is Cytosolic Fe-S cluster assembly factor nar1 (nar1), found in Penicillium rubens (strain ATCC 28089 / DSM 1075 / NRRL 1951 / Wisconsin 54-1255) (Penicillium chrysogenum).